The sequence spans 451 residues: UPF0210 protein lmo0534 (451 aa).

It belongs to the UPF0210 family. Homodimer.

This Listeria monocytogenes serovar 1/2a (strain ATCC BAA-679 / EGD-e) protein is UPF0210 protein lmo0534.